A 150-amino-acid chain; its full sequence is Ribosomal RNA large subunit methyltransferase H (150 aa).

S-adenosyl-L-methionine-binding positions include Ala100 and 118 to 123; that span reads LSEMTF.

Belongs to the RNA methyltransferase RlmH family. In terms of assembly, homodimer.

The protein localises to the cytoplasm. It catalyses the reaction pseudouridine(1915) in 23S rRNA + S-adenosyl-L-methionine = N(3)-methylpseudouridine(1915) in 23S rRNA + S-adenosyl-L-homocysteine + H(+). Specifically methylates the pseudouridine at position 1915 (m3Psi1915) in 23S rRNA. This chain is Ribosomal RNA large subunit methyltransferase H, found in Helicobacter pylori (strain HPAG1).